Here is a 153-residue protein sequence, read N- to C-terminus: Mediator of RNA polymerase II transcription subunit 31 (153 aa).

Disordered stretches follow at residues 1 to 28 (MTLG…RRQA) and 125 to 153 (RDPE…GQTA).

This sequence belongs to the Mediator complex subunit 31 family. As to quaternary structure, component of the Mediator complex.

The protein resides in the nucleus. Functionally, component of the Mediator complex, a coactivator involved in the regulated transcription of nearly all RNA polymerase II-dependent genes. Mediator functions as a bridge to convey information from gene-specific regulatory proteins to the basal RNA polymerase II transcription machinery. Mediator is recruited to promoters by direct interactions with regulatory proteins and serves as a scaffold for the assembly of a functional preinitiation complex with RNA polymerase II and the general transcription factors. The protein is Mediator of RNA polymerase II transcription subunit 31 (SOH1) of Mycosarcoma maydis (Corn smut fungus).